Consider the following 137-residue polypeptide: Large ribosomal subunit protein uL16 (137 aa).

Belongs to the universal ribosomal protein uL16 family. In terms of assembly, part of the 50S ribosomal subunit.

In terms of biological role, binds 23S rRNA and is also seen to make contacts with the A and possibly P site tRNAs. The protein is Large ribosomal subunit protein uL16 of Rhizobium rhizogenes (strain K84 / ATCC BAA-868) (Agrobacterium radiobacter).